An 885-amino-acid chain; its full sequence is DNA mismatch repair protein MutS (885 aa).

G626–S633 is an ATP binding site.

It belongs to the DNA mismatch repair MutS family.

In terms of biological role, this protein is involved in the repair of mismatches in DNA. It is possible that it carries out the mismatch recognition step. This protein has a weak ATPase activity. The sequence is that of DNA mismatch repair protein MutS from Burkholderia orbicola (strain MC0-3).